The primary structure comprises 476 residues: Serine carboxypeptidase 2 (476 aa).

The N-terminal stretch at 1 to 34 is a signal peptide; sequence MRTTTRRLPPAPAAAAVLLAALTCLLLRPAAVAA. 3 cysteine pairs are disulfide-bonded: Cys-97/Cys-353, Cys-254/Cys-266, and Cys-290/Cys-320. Asn-148 and Asn-159 each carry an N-linked (GlcNAc...) asparagine glycan. Ser-190 is an active-site residue. Asn-291 carries N-linked (GlcNAc...) asparagine glycosylation. A propeptide spans 295-313 (linker peptide); sequence SSSSSSLSRRRTRGRYPWL. Thr-314 carries the blocked amino end (Thr) modification. 2 N-linked (GlcNAc...) asparagine glycosylation sites follow: Asn-341 and Asn-347. The N-linked (GlcNAc...) asparagine; partial glycan is linked to Asn-352. O-linked (GalNAc...) threonine; in variant 351-AT-352 glycosylation occurs at Asn-352. Active-site residues include Asp-390 and His-443. N-linked (GlcNAc...) asparagine glycosylation is present at Asn-472.

Belongs to the peptidase S10 family. In terms of assembly, carboxypeptidase II is a dimer, where each monomer is composed of two chains linked by a disulfide bond.

The protein localises to the secreted. The catalysed reaction is Preferential release of a C-terminal arginine or lysine residue.. In terms of biological role, may be involved in the degradation of small peptides (2-5 residues) or in the degradation of storage proteins in the embryo. The chain is Serine carboxypeptidase 2 (CBP2) from Hordeum vulgare (Barley).